Here is a 210-residue protein sequence, read N- to C-terminus: MELQLAIDLLNKEDAAELANKVKDYVDIVEIGTPIIYNEGLPAVKHMADNISNVKVLADMKIMDAADYEVSQAIKFGADVITILGVAEDASIKAAIEEAHKNNKQLLVDMIAVQDLEKRAKELDEMGADYIAVHTGYDLQAEGQSPLESLRTVKSVIKNSKVAVAGGIKPDTIKEIVAESPDLVIVGGGIANADDPVEAAKQCRAAIEGK.

It belongs to the HPS/KGPDC family. HPS subfamily.

The enzyme catalyses D-ribulose 5-phosphate + formaldehyde = D-arabino-hex-3-ulose 6-phosphate. The protein operates within one-carbon metabolism; formaldehyde assimilation via RuMP pathway; D-fructose 6-phosphate from D-ribulose 5-phosphate and formaldehyde: step 1/2. Functionally, catalyzes the condensation of ribulose 5-phosphate with formaldehyde to form 3-hexulose 6-phosphate. The sequence is that of 3-hexulose-6-phosphate synthase from Staphylococcus aureus (strain MRSA252).